The chain runs to 308 residues: Taste receptor type 2 member 43 (308 aa).

A topological domain (extracellular) is located at residue methionine 1. A helical membrane pass occupies residues 2–22; the sequence is ITFLPIIFSILVVVTFVIGNC. Over 23–46 the chain is Cytoplasmic; sequence ANGFIALVNSTEWVKRQKISFADQ. A helical membrane pass occupies residues 47-67; it reads ILTALAVSRVGLLWVLLLNWY. Topologically, residues 68–86 are extracellular; it reads ATVLNPAFYSVEVRTIVYN. The helical transmembrane segment at 87-107 threads the bilayer; it reads LWAVINHFSNWLATSLSIFYL. At 108–126 the chain is on the cytoplasmic side; that stretch reads LKIANFSNLIFLHLKRRVK. Residues 127–147 form a helical membrane-spanning segment; it reads SVVLVILLGPLLFLVCHLFVV. Topologically, residues 148 to 178 are extracellular; that stretch reads NMNEIVRTKEYEGNMTWKSKLRSAMYLSNTT. Asparagine 161 and asparagine 176 each carry an N-linked (GlcNAc...) asparagine glycan. A helical membrane pass occupies residues 179-199; sequence VTILANLVPFILTLISFLLLI. At 200-229 the chain is on the cytoplasmic side; it reads CSLCKHLKKMQLRDKGSQDPSTKVHIKALQ. Residues 230–249 traverse the membrane as a helical segment; that stretch reads TVISLLLCVIYFLSIMISSW. Topologically, residues 250 to 258 are extracellular; it reads SLGRVENKA. A helical membrane pass occupies residues 259-279; that stretch reads VFMFCKAIRFSYPSAHAFILI. At 280-308 the chain is on the cytoplasmic side; sequence WGNKKLKQTLLSVLWNVRYCVKGQKLPSP.

It belongs to the G-protein coupled receptor T2R family.

It localises to the membrane. The protein localises to the cell projection. Its subcellular location is the cilium membrane. In terms of biological role, gustducin-coupled receptor immplicated in the perception of bitter compounds in the oral cavity and the gastrointestinal tract. Signals through PLCB2 and the calcium-regulated cation channel TRPM5. Activated by the sulfonyl amide sweeteners saccharin and acesulfame K. In airway epithelial cells, binding of bitter compounds increases the intracellular calcium ion concentration and stimulates ciliary beat frequency. May act as chemosensory receptors in airway epithelial cells to detect and eliminate potential noxious agents from the airways. The protein is Taste receptor type 2 member 43 (TAS2R43) of Papio hamadryas (Hamadryas baboon).